A 156-amino-acid chain; its full sequence is MTRRQRRLGILLAALVCAGAATALTLNAFRSNLVFFFSPTQIAAKEAPVAQVFRLGGLVERGSIQRERDGMTIRFIVTDTARGVPVVYHGLLPDLFREGKGVVARGRLGEDGVFVANEVLAKHDENYMPPEAADALRRAVQVNEQMAKESARSASR.

Residues 1–7 (MTRRQRR) lie on the Cytoplasmic side of the membrane. The chain crosses the membrane as a helical; Signal-anchor for type II membrane protein span at residues 8 to 28 (LGILLAALVCAGAATALTLNA). Over 29 to 156 (FRSNLVFFFS…AKESARSASR (128 aa)) the chain is Periplasmic. Heme contacts are provided by H123 and Y127.

Belongs to the CcmE/CycJ family.

It is found in the cell inner membrane. Functionally, heme chaperone required for the biogenesis of c-type cytochromes. Transiently binds heme delivered by CcmC and transfers the heme to apo-cytochromes in a process facilitated by CcmF and CcmH. The sequence is that of Cytochrome c-type biogenesis protein CcmE from Ralstonia pickettii (strain 12J).